Reading from the N-terminus, the 268-residue chain is Protein atz-1 (268 aa).

The stretch at 171–243 (VDDANKLTEV…EEGEEDYEEE (73 aa)) forms a coiled coil. Residues 229–268 (DLMKEEEGEEDYEEEENYEVEEDFEDEEEYDEEGEEEDYE) are disordered. Residues 231–268 (MKEEEGEEDYEEEENYEVEEDFEDEEEYDEEGEEEDYE) show a composition bias toward acidic residues.

It localises to the nucleus. Plays a role in meiosis, germline development and oocyte morphogenesis. May play a role in DNA replication. In the germline, involved in the maintenance of transition zone nuclei and in chromosome structure and organization, but not required for mitotic proliferation. This chain is Protein atz-1, found in Caenorhabditis elegans.